The sequence spans 1344 residues: Protein stu1 (1344 aa).

The HEAT 1 repeat unit spans residues 93-131 (LYPLLVERLGDHKERIRAQAAQSFTDMWLAAPEEVEQCV). Positions 265-292 (HRPVSRAETQASRSVSRLDTHQRPASRM) are disordered. An HEAT 2 repeat occupies 508-544 (VTFTTRILQHVSGACQDKNVQLRLFAAGWLKTLIQKQ). Disordered regions lie at residues 606-637 (RSLLEKDPANPNAHQSAPKDSGPSRKGLANGT), 651-847 (AAQK…STPR), 914-945 (LTENQTPQPSKVHSDSPIVSNKRVSNQDESVP), 984-1004 (PVTHQPDSVTDSSKPSGLSSS), and 1031-1054 (SLPHRSSPKHNVLGELTSNEPSQR). 2 stretches are compositionally biased toward polar residues: residues 691-705 (VRTVPTGTSLSSLSS) and 735-747 (ATDSSTRHGNQID). Low complexity predominate over residues 748 to 769 (GSPSAAKSKSSTPSLKSVSSTG). Composition is skewed to polar residues over residues 828–847 (FSVTPISPNSVSLETPSTPR) and 914–942 (LTENQTPQPSKVHSDSPIVSNKRVSNQDE). The segment covering 995-1004 (SSKPSGLSSS) has biased composition (low complexity).

It belongs to the CLASP family. As to quaternary structure, interacts with microtubules.

It localises to the cytoplasm. Its subcellular location is the cytoskeleton. The protein resides in the nucleus. It is found in the spindle. Functionally, microtubule binding protein that promotes the stabilization of dynamic microtubules. Required for mitotic spindle formation. This Aspergillus fumigatus (strain ATCC MYA-4609 / CBS 101355 / FGSC A1100 / Af293) (Neosartorya fumigata) protein is Protein stu1 (stu1).